The following is a 222-amino-acid chain: N-(5'-phosphoribosyl)anthranilate isomerase (222 aa).

Belongs to the TrpF family.

It catalyses the reaction N-(5-phospho-beta-D-ribosyl)anthranilate = 1-(2-carboxyphenylamino)-1-deoxy-D-ribulose 5-phosphate. The protein operates within amino-acid biosynthesis; L-tryptophan biosynthesis; L-tryptophan from chorismate: step 3/5. The polypeptide is N-(5'-phosphoribosyl)anthranilate isomerase (Rhizobium leguminosarum bv. trifolii (strain WSM2304)).